We begin with the raw amino-acid sequence, 362 residues long: Lactosylceramide alpha-2,3-sialyltransferase (362 aa).

Over 1–5 (MRRPS) the chain is Cytoplasmic. The helical; Signal-anchor for type II membrane protein transmembrane segment at 6–26 (LLLKDILKCTLLVFGVWILYI) threads the bilayer. Topologically, residues 27–362 (LKLNYTTEEC…DLSGGIDREF (336 aa)) are lumenal. Residues Asn-30, Asn-180, Asn-224, and Asn-334 are each glycosylated (N-linked (GlcNAc...) asparagine). An intrachain disulfide couples Cys-139 to Cys-297.

This sequence belongs to the glycosyltransferase 29 family.

It localises to the golgi apparatus membrane. The catalysed reaction is a beta-D-Gal-(1-&gt;4)-beta-D-Glc-(1&lt;-&gt;1)-Cer(d18:1(4E)) + CMP-N-acetyl-beta-neuraminate = a ganglioside GM3 (d18:1(4E)) + CMP + H(+). It carries out the reaction ganglioside GA2 (d18:1(4E)/18:0) + CMP-N-acetyl-beta-neuraminate = ganglioside GM2 (d18:1(4E)/18:0) + CMP + H(+). The enzyme catalyses a beta-D-Gal-(1&lt;-&gt;1')-ceramide + CMP-N-acetyl-beta-neuraminate = N-acetyl-alpha-neuraminosyl-(2-&gt;3)-beta-D-galactosyl-(1&lt;-&gt;1')-ceramide + CMP + H(+). It catalyses the reaction ganglioside GA1 (d18:1(4E)/18:0) + CMP-N-acetyl-beta-neuraminate = ganglioside GM1 (d18:1(4E)/18:0) + CMP + H(+). In terms of biological role, transfers the sialyl group (N-acetyl-alpha-neuraminyl or NeuAc) from CMP-NeuAc to the non-reducing terminal galactose (Gal) of glycosphingolipids forming gangliosides (important molecules involved in the regulation of multiple cellular processes, including cell proliferation and differentiation, apoptosis, embryogenesis, development, and oncogenesis). Mainly involved in the biosynthesis of ganglioside GM3 but can also use different glycolipids as substrate acceptors such as D-galactosylceramide (GalCer), asialo-GM2 (GA2) and asialo-GM1 (GA1), although less preferentially than beta-D-Gal-(1-&gt;4)-beta-D-Glc-(1&lt;-&gt;1)-Cer (LacCer). This is Lactosylceramide alpha-2,3-sialyltransferase (ST3GAL5) from Pan troglodytes (Chimpanzee).